The primary structure comprises 366 residues: NADH-quinone oxidoreductase subunit D (366 aa).

It belongs to the complex I 49 kDa subunit family. NDH-1 is composed of 14 different subunits. Subunits NuoB, C, D, E, F, and G constitute the peripheral sector of the complex.

Its subcellular location is the cell membrane. It catalyses the reaction a quinone + NADH + 5 H(+)(in) = a quinol + NAD(+) + 4 H(+)(out). Its function is as follows. NDH-1 shuttles electrons from NADH, via FMN and iron-sulfur (Fe-S) centers, to quinones in the respiratory chain. The immediate electron acceptor for the enzyme in this species is believed to be a menaquinone. Couples the redox reaction to proton translocation (for every two electrons transferred, four hydrogen ions are translocated across the cytoplasmic membrane), and thus conserves the redox energy in a proton gradient. This is NADH-quinone oxidoreductase subunit D from Desulforamulus reducens (strain ATCC BAA-1160 / DSM 100696 / MI-1) (Desulfotomaculum reducens).